The primary structure comprises 238 residues: Orotidine 5'-phosphate decarboxylase (238 aa).

Substrate is bound by residues aspartate 18, lysine 40, 67-76 (DMKLLDIDNT), threonine 122, arginine 183, glutamine 192, and arginine 213. Lysine 69 (proton donor) is an active-site residue.

It belongs to the OMP decarboxylase family. Type 1 subfamily. Homodimer.

The catalysed reaction is orotidine 5'-phosphate + H(+) = UMP + CO2. Its pathway is pyrimidine metabolism; UMP biosynthesis via de novo pathway; UMP from orotate: step 2/2. Functionally, catalyzes the decarboxylation of orotidine 5'-monophosphate (OMP) to uridine 5'-monophosphate (UMP). This is Orotidine 5'-phosphate decarboxylase from Brucella abortus (strain S19).